The primary structure comprises 527 residues: L-amino-acid oxidase (527 aa).

The first 27 residues, 1–27 (MDLHRAPWKSSAAAAVLLLALFSGAAA), serve as a signal peptide directing secretion. A disulfide bond links cysteine 37 and cysteine 200. A glycan (N-linked (GlcNAc...) asparagine) is linked at asparagine 58. Residues 70-71 (VA), 90-91 (EA), arginine 98, 114-117 (GAMR), and valine 288 contribute to the FAD site. A substrate-binding site is contributed by arginine 117. N-linked (GlcNAc...) asparagine glycosylation occurs at asparagine 393. Substrate is bound at residue tyrosine 403. FAD-binding positions include glutamate 485 and 492-497 (AWMESA). 492–493 (AW) is a substrate binding site.

In terms of assembly, homodimer. It depends on FAD as a cofactor. As to expression, expression mainly observed in plasma, spleen, kidney and gills with low levels detected in blood and no expression detected in brain, liver, heart, muscle or intestine (at protein level).

It is found in the secreted. The catalysed reaction is an L-alpha-amino acid + O2 + H2O = a 2-oxocarboxylate + H2O2 + NH4(+). In terms of biological role, inhibits the growth of both Gram-negative and Gram-positive bacteria. Displays strong antibacterial activity towards V.cholerae and E.tarda. Causes deformation of the surface of S.aureus and the formation of pores on the surface of E.coli. Strong antiparasitic activity is seen towards C.irritans, T.brucei and I.multifiliis. Cilia of treated theronts are lost and the macronucleus swells, inducing cell membrane rupture and efflux of the cytoplasm. The protein is L-amino-acid oxidase of Siganus canaliculatus (White-spotted spinefoot).